The chain runs to 298 residues: MATANLRRGYVLGLTAYVIWGLFPLYFKLLERIPAVEIIVQRAVWSALFGAVLLLFWKHPGWWRELRQNPQRFVVLAASGLLIASNWMTYVWAVNNGHMLEASLGYYINPLINVMLGMLLLKERLRPLQWLAVALASLGVAQQVWQLGSLPWVSLVLALTFGFYGLIRKKAPVAALPGLVVETWLLLPLALVWLLFFADGPTSETAFWSTPEALWVVAAGPVTLVPLVCFNAAARHLPYATLGFLQYLAPTLVLLQAILLFGEHLDSSRLTAFAFIWLALAVYSFDAWRSLRRLPQPG.

A run of 10 helical transmembrane segments spans residues 9 to 28 (GYVLGLTAYVIWGLFPLYFK), 38 to 60 (IIVQRAVWSALFGAVLLLFWKHP), 72 to 94 (RFVVLAASGLLIASNWMTYVWAV), 104 to 121 (LGYYINPLINVMLGMLLL), 128 to 145 (LQWLAVALASLGVAQQVW), 150 to 167 (LPWVSLVLALTFGFYGLI), 174 to 196 (AALPGLVVETWLLLPLALVWLLF), 211 to 233 (PEALWVVAAGPVTLVPLVCFNAA), 240 to 262 (ATLGFLQYLAPTLVLLQAILLFG), and 272 to 291 (AFAFIWLALAVYSFDAWRSL). Residues 18-141 (VIWGLFPLYF…AVALASLGVA (124 aa)) form the EamA domain.

This sequence belongs to the EamA transporter family.

The protein resides in the cell membrane. This is an uncharacterized protein from Pseudomonas aeruginosa (strain ATCC 15692 / DSM 22644 / CIP 104116 / JCM 14847 / LMG 12228 / 1C / PRS 101 / PAO1).